We begin with the raw amino-acid sequence, 660 residues long: Chaperone protein DnaK (660 aa).

Thr-201 is modified (phosphothreonine; by autocatalysis). The tract at residues 599-660 (EAMQAQSASA…ADVEIVDKPE (62 aa)) is disordered. Low complexity predominate over residues 600 to 617 (AMQAQSASAAASSAANAQ).

Belongs to the heat shock protein 70 family.

Acts as a chaperone. The sequence is that of Chaperone protein DnaK from Chlamydia trachomatis serovar A (strain ATCC VR-571B / DSM 19440 / HAR-13).